Consider the following 361-residue polypeptide: MTRGLTIALDGMGGDHGPETVIGGADIASVRHPDIRFLIYGDETKIRPFLEKHPRVLSVSEIIHTDVSVSMEDKPSQALRRGRKTSSMWLAIDAVKAGEAQAAVSAGNTGALMAMAKVILRMMPNVERPALAALWPTARGESVMLDLGATVGADGYQLVQFAAMGEAFARVVFNIEQPTVGLLNIGEEEVKGTEGVKLAAQMLREADLPIRFHGFVEGDDIAKGTVDVVVTDGYTGNIALKTAEGMVRLVVDYLRAAMRSSLLSRLGYLLAYGAFRALAKKLDPRASNGAVFLGLNGLVVKSHGGTDAIGFAAAIDVAVDVASADLLSKIVTDLDRLSGLTTSMAGRKQNSDIAESEAVLS.

It belongs to the PlsX family. As to quaternary structure, homodimer. Probably interacts with PlsY.

Its subcellular location is the cytoplasm. The catalysed reaction is a fatty acyl-[ACP] + phosphate = an acyl phosphate + holo-[ACP]. The protein operates within lipid metabolism; phospholipid metabolism. In terms of biological role, catalyzes the reversible formation of acyl-phosphate (acyl-PO(4)) from acyl-[acyl-carrier-protein] (acyl-ACP). This enzyme utilizes acyl-ACP as fatty acyl donor, but not acyl-CoA. In Parvibaculum lavamentivorans (strain DS-1 / DSM 13023 / NCIMB 13966), this protein is Phosphate acyltransferase.